The following is a 170-amino-acid chain: MISEVDMDDNFLGLRARDEFYSGKHIHRASQLILLDPENRILLQKRSPGKFWFPNRYTYSVSGTVADESYEACIAREMLEEIGISVPFRRLFKIPCIRENKGAYHTIFSGRCSEEAASLIRHDLEEATSIEWVELEELHRAVKAEPGNYTPALREGIIKIFKEGCEKYLF.

A Nudix hydrolase domain is found at 25–155; it reads HIHRASQLIL…PGNYTPALRE (131 aa). A Nudix box motif is present at residues 59–83; sequence YSVSGTVADESYEACIAREMLEEIG. Residues E77 and E81 each coordinate Mg(2+).

Belongs to the Nudix hydrolase family. It depends on Mg(2+) as a cofactor.

It catalyses the reaction dimethylallyl diphosphate + H2O = dimethylallyl phosphate + phosphate + H(+). It carries out the reaction isopentenyl diphosphate + H2O = isopentenyl phosphate + phosphate + H(+). The enzyme catalyses (2E,6E)-farnesyl diphosphate + H2O = (2E,6E)-farnesyl phosphate + phosphate + H(+). The catalysed reaction is (2E)-geranyl diphosphate + H2O = (2E)-geranyl phosphate + phosphate + H(+). It functions in the pathway isoprenoid biosynthesis. Its function is as follows. Hydrolyzes homoallylic isopentenyl diphosphate (IPP), its allylic isomer dimethylallyl diphosphate (DMAPP) and short-chain prenyl diphosphates geranyl diphosphate (GPP) and farnesyl diphosphate (FPP) to their corresponding monophosphate forms with high activity. The preferred substrate is IPP. ADP, NADPH, Ap5A and thiamine diphosphate (TPP) are weakly hydrolyzed. No hydrolysis with ATP, dNTPs, 8-OH-dGTP, NAD+, FAD or acetyl-CoA. The likely physiological role of this enzyme is to provide a substrate dimethylallyl phosphate (DMAP) for prenylated flavin mononucleotide (prenyl-FMN) synthase MM_1871 involved in the biosynthesis of prenyl-FMN, a coenzyme required in the archaea-specific mevalonate pathway. This Methanosarcina mazei (strain ATCC BAA-159 / DSM 3647 / Goe1 / Go1 / JCM 11833 / OCM 88) (Methanosarcina frisia) protein is Prenyl-diphosphate phosphatase.